The chain runs to 907 residues: Anaphase-promoting complex subunit 2 (907 aa).

Disordered regions lie at residues 203–228 (NNSK…EEES) and 790–838 (NKEK…AKEK). Acidic residues-rich tracts occupy residues 214 to 226 (QQEE…ENEE) and 804 to 830 (ENDD…EEEE).

It belongs to the cullin family. As to quaternary structure, the APC/C is composed of at least 13 subunits that stay tightly associated throughout the cell cycle: anapc1, anapc2, anapc3, anapc4, anapc5, anapc6, anapc7, anapc8, anapc10, anapc11, cdc20, cdc26 and cdh1.

The protein localises to the nucleus. It functions in the pathway protein modification; protein ubiquitination. Component of the anaphase promoting complex/cyclosome (APC/C), a cell cycle-regulated E3 ubiquitin-protein ligase complex that controls progression through mitosis and the G1 phase of the cell cycle. In Dictyostelium discoideum (Social amoeba), this protein is Anaphase-promoting complex subunit 2 (anapc2).